Here is a 911-residue protein sequence, read N- to C-terminus: Alpha-actinin-4 (911 aa).

Positions 1 to 30 are disordered; it reads MVDYHAASQSYQYGPSSAGNGAGGGGSMGD. The interval 1 to 269 is actin-binding; it reads MVDYHAASQS…YVSSFYHAFS (269 aa). Residues 12 to 26 are interaction with VCL; sequence QYGPSSAGNGAGGGG. Y31 is modified (phosphotyrosine). Residues 40-61 are interaction with VCL; it reads RDLLLDPAWEKQQRKTFTAWCN. Calponin-homology (CH) domains follow at residues 50–154 and 163–269; these read KQQR…LRFA and TSAK…HAFS. Residues 84–88 carry the LXXLL motif motif; it reads LMLLL. The interval 108–126 is interaction with VCL; sequence KINNVNKALDFIASKGVKL. K114 is subject to N6-acetyllysine. The tract at residues 177–192 is polyphosphoinositide (PIP2)-binding; that stretch reads TAPYKNVNVQNFHISW. At K214 the chain carries N6-acetyllysine. T249 is subject to Phosphothreonine. Spectrin repeat units follow at residues 293–403, 413–518, 528–639, and 649–752; these read HLME…WLLN, HLAE…ALEK, QLHL…ALLE, and HLRR…EVEN. Residues K592 and K625 each carry the N6-acetyllysine modification. S696 is modified (phosphoserine). The segment at 736–911 is mediates interaction with MICALL2; it reads WEQLLTTIAR…STALYGESDL (176 aa). 2 EF-hand domains span residues 765-800 and 806-841; these read EQMQ…LGYD and QGEA…ETTD. D778 provides a ligand contact to Ca(2+). Residue K779 is modified to N6-acetyllysine. 2 residues coordinate Ca(2+): D780 and E789. Position 859 is an N6-acetyllysine (K859). Position 909 is a phosphoserine (S909).

This sequence belongs to the alpha-actinin family. Homodimer; antiparallel. Identified in a IGF2BP1-dependent mRNP granule complex containing untranslated mRNAs. Component of the CART complex, at least composed of ACTN4, HGS/HRS, MYO5B and TRIM3. Binds TRIM3 at the N-terminus. Interacts with MAGI1. Interacts with PDLIM2. Identified in a complex with CASK, IQGAP1, MAGI2, NPHS1, SPTAN1 and SPTBN1. Interacts with MICALL2 (preferentially in opened conformation); stimulated by RAB13 activation. Interacts with PPARG and RARA. Binds to VCL; this interaction triggers VCL conformational changes. Interacts with SEPTIN14. Interacts with IGSF8.

It is found in the nucleus. Its subcellular location is the cytoplasm. The protein localises to the cell junction. It localises to the cytoskeleton. The protein resides in the stress fiber. It is found in the perinuclear region. F-actin cross-linking protein which is thought to anchor actin to a variety of intracellular structures. This is a bundling protein. Probably involved in vesicular trafficking via its association with the CART complex. The CART complex is necessary for efficient transferrin receptor recycling but not for EGFR degradation. Involved in tight junction assembly in epithelial cells probably through interaction with MICALL2. Links MICALL2 to the actin cytoskeleton and recruits it to the tight junctions. May also function as a transcriptional coactivator, stimulating transcription mediated by the nuclear hormone receptors PPARG and RARA. Association with IGSF8 regulates the immune synapse formation and is required for efficient T-cell activation. This is Alpha-actinin-4 from Pongo abelii (Sumatran orangutan).